A 131-amino-acid polypeptide reads, in one-letter code: MSWQTYVDERLMCEIEGNHLTAAAIIGQDGSVWAQSSNFPQFKSEEITAIMSDFDEPGTLAPTGLHLGGTKYMVIQGEAGAVIRGKKGPGGVTVRKTNQALIIGIYDEPMTPGQCNMIVERLGDYLLEQGM.

It belongs to the profilin family. As to quaternary structure, occurs in many kinds of cells as a complex with monomeric actin in a 1:1 ratio.

It localises to the cytoplasm. The protein resides in the cytoskeleton. Binds to actin and affects the structure of the cytoskeleton. At high concentrations, profilin prevents the polymerization of actin, whereas it enhances it at low concentrations. By binding to PIP2, it inhibits the formation of IP3 and DG. This Hevea brasiliensis (Para rubber tree) protein is Profilin-1.